The chain runs to 311 residues: Aspartate carbamoyltransferase catalytic subunit (311 aa).

Carbamoyl phosphate is bound by residues R55 and T56. Position 85 (K85) interacts with L-aspartate. Residues R106, H135, and Q138 each coordinate carbamoyl phosphate. L-aspartate-binding residues include R168 and R230. The carbamoyl phosphate site is built by L268 and P269.

This sequence belongs to the aspartate/ornithine carbamoyltransferase superfamily. ATCase family. In terms of assembly, heterododecamer (2C3:3R2) of six catalytic PyrB chains organized as two trimers (C3), and six regulatory PyrI chains organized as three dimers (R2).

The catalysed reaction is carbamoyl phosphate + L-aspartate = N-carbamoyl-L-aspartate + phosphate + H(+). The protein operates within pyrimidine metabolism; UMP biosynthesis via de novo pathway; (S)-dihydroorotate from bicarbonate: step 2/3. In terms of biological role, catalyzes the condensation of carbamoyl phosphate and aspartate to form carbamoyl aspartate and inorganic phosphate, the committed step in the de novo pyrimidine nucleotide biosynthesis pathway. In Salmonella paratyphi C (strain RKS4594), this protein is Aspartate carbamoyltransferase catalytic subunit.